The chain runs to 184 residues: CKLF-like MARVEL transmembrane domain-containing protein 3 (184 aa).

Acidic residues predominate over residues 1 to 12 (MWPPDAEPEPDP). Residues 1–22 (MWPPDAEPEPDPESAHGPRSGR) form a disordered region. The region spanning 36–155 (FLCSLKGRLL…DFYLIFNEVA (120 aa)) is the MARVEL domain. The next 3 membrane-spanning stretches (helical) occupy residues 64-84 (ASAFLTVPLLEFLLAVYFLFA), 96-116 (LCWPMMDFLRCVTAALIYFVI), and 131-151 (AAGVFGFFATIVFAIDFYLIF). Residues 163–184 (SGNETTAHRTEEENSNSDSDSD) form a disordered region. Residues 175–184 (ENSNSDSDSD) are compositionally biased toward acidic residues.

It belongs to the chemokine-like factor family.

The protein resides in the membrane. This chain is CKLF-like MARVEL transmembrane domain-containing protein 3 (Cmtm3), found in Mus musculus (Mouse).